The sequence spans 608 residues: Pentatricopeptide repeat-containing protein 1, apicoplast (608 aa).

PPR repeat units lie at residues 165 to 199, 200 to 230, 236 to 270, 336 to 370, 372 to 402, 410 to 445, and 446 to 480; these read TTLAFNAAMSAVEKKGCLSTMLDLIGTMKSKNIKP, DLVSYKLVLSLCDKYHLVDTAEILFEEMIES, NYEIYAIMISCYAKTGNGYKAIELFEKLRNDPFVE, QYSEYANVIYACNISNLYEQGIKYFEELLKSGKYM, SIFVFENIFDLLSKNGDYEKSLEYYNNLKND, NVNILNNLLKALSIHNKINVAEDIWNNEFDELLLTP, and NNLSYQILLKIYSHIDNYEKAFKLFKEMQVNKLLN.

The protein belongs to the PPR family. P subfamily. As to quaternary structure, homodimer.

Its subcellular location is the plastid. The protein resides in the apicoplast. In terms of biological role, binds to apicoplast RNA transcripts, preferentially to the motif UUAU, and protects RNA transcripts from degradation by ribonuclease. This chain is Pentatricopeptide repeat-containing protein 1, apicoplast, found in Plasmodium falciparum (isolate 3D7).